We begin with the raw amino-acid sequence, 329 residues long: uncharacterized protein (329 aa).

Positions 56–247 (LNKEEQFQED…EAEKTHQAKL (192 aa)) form a coiled coil.

This is an uncharacterized protein from Bos taurus (Bovine).